A 744-amino-acid polypeptide reads, in one-letter code: 1,4-alpha-glucan branching enzyme GlgB (744 aa).

Positions 1–23 (MSGPEDPADRRHGEVPAPRRDIP) are disordered. Over residues 7-23 (PADRRHGEVPAPRRDIP) the composition is skewed to basic and acidic residues. The active-site Nucleophile is the aspartate 424. The Proton donor role is filled by glutamate 476.

Belongs to the glycosyl hydrolase 13 family. GlgB subfamily. In terms of assembly, monomer.

The catalysed reaction is Transfers a segment of a (1-&gt;4)-alpha-D-glucan chain to a primary hydroxy group in a similar glucan chain.. Its pathway is glycan biosynthesis; glycogen biosynthesis. Functionally, catalyzes the formation of the alpha-1,6-glucosidic linkages in glycogen by scission of a 1,4-alpha-linked oligosaccharide from growing alpha-1,4-glucan chains and the subsequent attachment of the oligosaccharide to the alpha-1,6 position. The sequence is that of 1,4-alpha-glucan branching enzyme GlgB from Nocardia farcinica (strain IFM 10152).